A 74-amino-acid chain; its full sequence is Probable tetrachloroethene reductive dehalogenase membrane anchor protein (74 aa).

A run of 2 helical transmembrane segments spans residues 11 to 31 (ALGL…ISMG) and 40 to 60 (AGSI…FLLM).

It belongs to the PceB family.

The protein resides in the cell inner membrane. Functionally, may act as a membrane anchor for the tetrachloroethene reductive dehalogenase PceA. This is Probable tetrachloroethene reductive dehalogenase membrane anchor protein from Sulfurospirillum multivorans (Dehalospirillum multivorans).